Here is a 158-residue protein sequence, read N- to C-terminus: NADH-quinone oxidoreductase subunit B (158 aa).

Residues Cys37, Cys38, Cys102, and Cys132 each coordinate [4Fe-4S] cluster.

It belongs to the complex I 20 kDa subunit family. In terms of assembly, NDH-1 is composed of 14 different subunits. Subunits NuoB, C, D, E, F, and G constitute the peripheral sector of the complex. It depends on [4Fe-4S] cluster as a cofactor.

The protein localises to the cell inner membrane. The enzyme catalyses a quinone + NADH + 5 H(+)(in) = a quinol + NAD(+) + 4 H(+)(out). Functionally, NDH-1 shuttles electrons from NADH, via FMN and iron-sulfur (Fe-S) centers, to quinones in the respiratory chain. Couples the redox reaction to proton translocation (for every two electrons transferred, four hydrogen ions are translocated across the cytoplasmic membrane), and thus conserves the redox energy in a proton gradient. This is NADH-quinone oxidoreductase subunit B from Bordetella avium (strain 197N).